Here is a 29-residue protein sequence, read N- to C-terminus: Glucagon (29 aa).

The protein belongs to the glucagon family.

The protein resides in the secreted. In terms of biological role, glucagon plays a key role in glucose metabolism and homeostasis. Regulates blood glucose by increasing gluconeogenesis and decreasing glycolysis. This is Glucagon (gcg) from Polypterus senegalus (Senegal bichir).